Reading from the N-terminus, the 914-residue chain is MVGIFNIVIDEENFKVLDSSLHFEVEAGLMYPSVSVVSWMGLANVFEAGMNASILILPKDAFGNNISFSGKKMEFQEFSLSLISENGSFAGVLNSTHIRWIVSGYISIDFVLVTSGKFLLLVEKESQTLNGGPLPLEVNSGPLDVSNCVSIWKSELSTWQIFSKMEILLHQKDRFGNIVSGFYEFDADVVEVETGLSIPVADFQFEYVEPGIQLMSFTLSEPGNFLLTLSDMKHNKSISSMPYVYTVYIGYCDGSRSIVNGSGINASIAGESLGFSVYLKDAYGYPSPVQVDRLQVRIVLEIDSSIILPTIQPREALNGTGSSHQAATPLYEKHGGRASGNLVTQASIFDVTYTPKRTGIYRIFISSGNIVLNGGQPFIKEVYAGEVNVAACSVTQFNGKVPKEIKNEIVVLLLDGFYNPVPSQPSRLKFEITSANTSSFTTWEFVDNNDGTYTGSYLAMEVGTYRMCISFDNKHIQPCPFDVNVYSNGYFPRAYDDPVNVWEDESISFNPLENDYFAGDNASMLGFSQPGHGSLLRDGNLLRYTPMKNFSGNDSFLYTIADINGNLAAATVYIFVLTAPPQFVSFSGGLQATEDLISPRYGGFSGLEISYSDLLENISVMVQALSGSVILSPMLMQFRPPGSGKLSVSNGGEDRRVLILEGQVGVINPALQSIQYLGNENFAGVDSLRLSTKNKNGINHLDVPVFVEPVNDPPFINVPQYIMLESNGSESLIFHPERDKFNFSVGDPDLVNFPGGESHFLVTFSLEVTDGFLLTNLPSELINSTELKFKNLFQWQPIQTYAAISKHVNVKASGIRFRGTIRQCNDLMQQLLHRGGENGAVLTLKLSDMGNYGCFLDCTERISLPLHAEARVNLIRKRPLSSLGAHGTFMKYLVVVPFSFFSIKLFSLLMVLIG.

Filamin repeat units lie at residues 249–382 and 391–485; these read IGYC…IKEV and ACSV…DVNV. A helical transmembrane segment spans residues 893-913; that stretch reads LVVVPFSFFSIKLFSLLMVLI.

As to expression, in tricellular pollen, expressed in mature sperm cells but not in the vegetative cell. In bicellular pollen, detected in the progenitor generative cell. Detected in the egg cell within the female gametophyte.

The protein localises to the cell membrane. This Arabidopsis thaliana (Mouse-ear cress) protein is Protein GAMETE EXPRESSED 2 (GEX2).